Consider the following 842-residue polypeptide: Alanine--tRNA ligase (842 aa).

Zn(2+) contacts are provided by His549, His553, Cys650, and His654.

Belongs to the class-II aminoacyl-tRNA synthetase family. Requires Zn(2+) as cofactor.

The protein localises to the cytoplasm. It catalyses the reaction tRNA(Ala) + L-alanine + ATP = L-alanyl-tRNA(Ala) + AMP + diphosphate. Functionally, catalyzes the attachment of alanine to tRNA(Ala) in a two-step reaction: alanine is first activated by ATP to form Ala-AMP and then transferred to the acceptor end of tRNA(Ala). Also edits incorrectly charged Ser-tRNA(Ala) and Gly-tRNA(Ala) via its editing domain. This is Alanine--tRNA ligase from Campylobacter jejuni (strain RM1221).